Reading from the N-terminus, the 188-residue chain is MPHSSPGAPLDPVAFIHSQIRTVPDWPQPGVQFRDITTLLQSPKALRILVDLFVERYVDAKLDYVAGLDARGFIIAPIVAYELSVGFVPIRKVGKLPYKTRSESYDLEYGSATVEIHEDACKPGDRVIIMDDLIATGGTMMAGRNLLQRLGAEVVEGAAIIDLPDLGGSTLLRNAGLPVYTVTEFAGH.

It belongs to the purine/pyrimidine phosphoribosyltransferase family. In terms of assembly, homodimer.

Its subcellular location is the cytoplasm. It carries out the reaction AMP + diphosphate = 5-phospho-alpha-D-ribose 1-diphosphate + adenine. The protein operates within purine metabolism; AMP biosynthesis via salvage pathway; AMP from adenine: step 1/1. Catalyzes a salvage reaction resulting in the formation of AMP, that is energically less costly than de novo synthesis. The polypeptide is Adenine phosphoribosyltransferase (Burkholderia orbicola (strain MC0-3)).